The primary structure comprises 189 residues: Chitin synthase 1 (189 aa).

Belongs to the chitin synthase family.

The protein localises to the cell membrane. It carries out the reaction [(1-&gt;4)-N-acetyl-beta-D-glucosaminyl](n) + UDP-N-acetyl-alpha-D-glucosamine = [(1-&gt;4)-N-acetyl-beta-D-glucosaminyl](n+1) + UDP + H(+). Functionally, polymerizes chitin, a structural polymer of the cell wall and septum, by transferring the sugar moiety of UDP-GlcNAc to the non-reducing end of the growing chitin polymer. This is Chitin synthase 1 (CHS1) from Schizophyllum commune (Split gill fungus).